Consider the following 1330-residue polypeptide: Sister chromatid cohesion protein PDS5 homolog A (1330 aa).

The stretch at 387–423 is one HEAT repeat; the sequence is SLVNDQLLGFVRERTLDKRWRVRKEAMMGLAQLYKKY. Residues 1138 to 1330 are disordered; the sequence is VNKPLSATGR…AAQRQIDLQR (193 aa). Positions 1160 to 1171 are enriched in low complexity; that stretch reads SNISVNSELSSS. The segment covering 1216-1225 has biased composition (polar residues); the sequence is SDQATQGNST.

It belongs to the PDS5 family. As to quaternary structure, interacts with the cohesin complex. Binds chromatin in a cohesin-dependent manner.

It localises to the nucleus. Functionally, may regulate sister chromatid cohesion during mitosis and couple it to DNA replication. In Gallus gallus (Chicken), this protein is Sister chromatid cohesion protein PDS5 homolog A.